Here is a 151-residue protein sequence, read N- to C-terminus: Sperm surface protein Sp17 (151 aa).

Disordered regions lie at residues 56–115 (DPAE…EKEE) and 127–151 (GHIA…EENK). Basic and acidic residues predominate over residues 62 to 98 (SKVEDRFYNNHAFEEQEPPEKSDPKQEESQISGKEEE). An IQ domain is found at 114–143 (EEVAAVKIQAAFRGHIAREEAKKMKTNSLQ).

In terms of assembly, homodimer. May interact with ROPN1. As to expression, testis and sperm specific.

The protein resides in the membrane. Sperm surface zona pellucida binding protein. Helps to bind spermatozoa to the zona pellucida with high affinity. Might function in binding zona pellucida and carbohydrates. The polypeptide is Sperm surface protein Sp17 (SPA17) (Homo sapiens (Human)).